Consider the following 117-residue polypeptide: Holo-[acyl-carrier-protein] synthase (117 aa).

Mg(2+)-binding residues include Asp-8 and Glu-59.

Belongs to the P-Pant transferase superfamily. AcpS family. It depends on Mg(2+) as a cofactor.

The protein resides in the cytoplasm. It carries out the reaction apo-[ACP] + CoA = holo-[ACP] + adenosine 3',5'-bisphosphate + H(+). Transfers the 4'-phosphopantetheine moiety from coenzyme A to a Ser of acyl-carrier-protein. This is Holo-[acyl-carrier-protein] synthase from Staphylococcus carnosus (strain TM300).